A 163-amino-acid polypeptide reads, in one-letter code: Neurotrophin-3 (163 aa).

Positions 1-3 (IQS) are cleaved as a signal peptide. A propeptide spanning residues 4–119 (TSMDQGILTE…VLNRTSRRKR (116 aa)) is cleaved from the precursor. Asn-112 carries an N-linked (GlcNAc...) asparagine glycan. The tract at residues 113-133 (RTSRRKREGKSHRGEYSVCDS) is disordered. Over residues 123–133 (SHRGEYSVCDS) the composition is skewed to basic and acidic residues.

It belongs to the NGF-beta family.

The protein localises to the secreted. Seems to promote the survival of visceral and proprioceptive sensory neurons. This is Neurotrophin-3 (NTF3) from Charina bottae (Northern rubber boa).